A 64-amino-acid chain; its full sequence is Large ribosomal subunit protein bL35 (64 aa).

The span at 1 to 22 shows a compositional bias: basic residues; sequence MPKMKSHTGMGKRVRVTGKGKI. Residues 1–28 are disordered; it reads MPKMKSHTGMGKRVRVTGKGKIVKQQAG.

This sequence belongs to the bacterial ribosomal protein bL35 family.

The chain is Large ribosomal subunit protein bL35 from Salinispora tropica (strain ATCC BAA-916 / DSM 44818 / JCM 13857 / NBRC 105044 / CNB-440).